A 143-amino-acid polypeptide reads, in one-letter code: Large ribosomal subunit protein uL13 (143 aa).

This sequence belongs to the universal ribosomal protein uL13 family. In terms of assembly, part of the 50S ribosomal subunit.

In terms of biological role, this protein is one of the early assembly proteins of the 50S ribosomal subunit, although it is not seen to bind rRNA by itself. It is important during the early stages of 50S assembly. The protein is Large ribosomal subunit protein uL13 of Rubrobacter xylanophilus (strain DSM 9941 / JCM 11954 / NBRC 16129 / PRD-1).